We begin with the raw amino-acid sequence, 155 residues long: Protein archease-like (155 aa).

Positions 26, 154, and 155 each coordinate Ca(2+).

The protein belongs to the archease family.

Component of the tRNA-splicing ligase complex required to facilitate the enzymatic turnover of catalytic subunit RtcB (F16A11.2). This Caenorhabditis elegans protein is Protein archease-like.